Here is a 604-residue protein sequence, read N- to C-terminus: Netrin-1 (604 aa).

The signal sequence occupies residues 1–24; sequence MMRAVWEALAALAAVACLVGAVRG. Positions 47–284 constitute a Laminin N-terminal domain; the sequence is HPRRCIPDFV…AVSDLQVGGR (238 aa). N-linked (GlcNAc...) asparagine glycans are attached at residues Asn95, Asn116, and Asn131. 15 disulfides stabilise this stretch: Cys119–Cys152, Cys285–Cys294, Cys287–Cys304, Cys306–Cys315, Cys318–Cys338, Cys341–Cys350, Cys343–Cys368, Cys371–Cys380, Cys383–Cys401, Cys404–Cys416, Cys406–Cys423, Cys425–Cys434, Cys437–Cys451, Cys472–Cys544, and Cys491–Cys601. 3 consecutive Laminin EGF-like domains span residues 285-340, 341-403, and 404-453; these read CKCN…ECVA, CNCN…ACKA, and CDCH…PCIK. Asn417 carries N-linked (GlcNAc...) asparagine glycosylation. The NTR domain maps to 472 to 601; that stretch reads CDSYCKASKG…FQQREKKGKC (130 aa). The Cell attachment site signature appears at 530–532; the sequence is RGD.

Binds to its receptors; DCC, UNC5A, UNC5B, UNC5C and probably UNC5D. Binds to its receptor; DSCAM. Interacts with APP. In terms of tissue distribution, in the embryo, widely expressed in the developing nervous system and in mesodermal tissues.

The protein localises to the secreted. The protein resides in the cytoplasm. In terms of biological role, netrins control guidance of CNS commissural axons and peripheral motor axons. Its association with either DCC or some UNC5 receptors will lead to axon attraction or repulsion, respectively. Binding to UNC5C might cause dissociation of UNC5C from polymerized TUBB3 in microtubules and thereby lead to increased microtubule dynamics and axon repulsion. Involved in dorsal root ganglion axon projection towards the spinal cord. It also serves as a survival factor via its association with its receptors which prevent the initiation of apoptosis. Involved in colorectal tumorigenesis by regulating apoptosis. This chain is Netrin-1 (Ntn1), found in Mus musculus (Mouse).